The sequence spans 157 residues: UPF0262 protein Avi_0642 (157 aa).

It belongs to the UPF0262 family.

This is UPF0262 protein Avi_0642 from Allorhizobium ampelinum (strain ATCC BAA-846 / DSM 112012 / S4) (Agrobacterium vitis (strain S4)).